A 204-amino-acid chain; its full sequence is Ribosome maturation factor RimP (204 aa).

The protein belongs to the RimP family.

It is found in the cytoplasm. Required for maturation of 30S ribosomal subunits. The polypeptide is Ribosome maturation factor RimP (Albidiferax ferrireducens (strain ATCC BAA-621 / DSM 15236 / T118) (Rhodoferax ferrireducens)).